A 199-amino-acid chain; its full sequence is Urease accessory protein UreG (199 aa).

Residue 8-15 participates in GTP binding; the sequence is GPVGSGKT.

This sequence belongs to the SIMIBI class G3E GTPase family. UreG subfamily. As to quaternary structure, homodimer. UreH, UreF and UreG form a complex that acts as a GTP-hydrolysis-dependent molecular chaperone, activating the urease apoprotein by helping to assemble the nickel containing metallocenter of UreC. The UreE protein probably delivers the nickel.

Its subcellular location is the cytoplasm. Functionally, facilitates the functional incorporation of the urease nickel metallocenter. This process requires GTP hydrolysis, probably effectuated by UreG. The polypeptide is Urease accessory protein UreG (Helicobacter pylori (strain J99 / ATCC 700824) (Campylobacter pylori J99)).